The sequence spans 203 residues: Holliday junction branch migration complex subunit RuvA (203 aa).

Residues 1–64 (MIGRLRGIIL…EDAQLLYGFN (64 aa)) form a domain I region. The tract at residues 65–142 (NKQERTLFKE…KGLHGDLFTP (78 aa)) is domain II. Positions 143-154 (AVDLVLTSPASP) are flexible linker. The segment at 155–203 (TSEDAEQEAVAALVALGYKPQEASRMVSKIARPDASSETLIRDALRAAL) is domain III.

The protein belongs to the RuvA family. As to quaternary structure, homotetramer. Forms an RuvA(8)-RuvB(12)-Holliday junction (HJ) complex. HJ DNA is sandwiched between 2 RuvA tetramers; dsDNA enters through RuvA and exits via RuvB. An RuvB hexamer assembles on each DNA strand where it exits the tetramer. Each RuvB hexamer is contacted by two RuvA subunits (via domain III) on 2 adjacent RuvB subunits; this complex drives branch migration. In the full resolvosome a probable DNA-RuvA(4)-RuvB(12)-RuvC(2) complex forms which resolves the HJ.

It localises to the cytoplasm. Functionally, the RuvA-RuvB-RuvC complex processes Holliday junction (HJ) DNA during genetic recombination and DNA repair, while the RuvA-RuvB complex plays an important role in the rescue of blocked DNA replication forks via replication fork reversal (RFR). RuvA specifically binds to HJ cruciform DNA, conferring on it an open structure. The RuvB hexamer acts as an ATP-dependent pump, pulling dsDNA into and through the RuvAB complex. HJ branch migration allows RuvC to scan DNA until it finds its consensus sequence, where it cleaves and resolves the cruciform DNA. This chain is Holliday junction branch migration complex subunit RuvA, found in Salmonella agona (strain SL483).